We begin with the raw amino-acid sequence, 514 residues long: M-phase inducer phosphatase 1 (514 aa).

A Phosphodegron motif is present at residues 73 to 83; it reads MGSSESTDSGF. Position 75 is a phosphoserine; by CHEK1 (S75). S78, S81, and S87 each carry phosphoserine; by NEK11. S106 carries the post-translational modification Phosphoserine. The residue at position 123 (S123) is a Phosphoserine; by CHEK1 and CHEK2. Residues 140-142 carry the KEN box motif; that stretch reads KEN. S172 bears the Phosphoserine; by CHEK1 mark. Residues 256-308 form a disordered region; it reads PCGSSTRAVLKRADRSHEEPPRGTKRRKSVPSPVKAKADVPEPAQLPSQSLSL. The span at 266 to 277 shows a compositional bias: basic and acidic residues; sequence KRADRSHEEPPR. Phosphoserine; by CHEK1 and CHEK2 occurs at positions 271 and 284. S311 carries the post-translational modification Phosphoserine. One can recognise a Rhodanese domain in the interval 366–472; sequence LIKEFVIIDC…FFLKCQSHCE (107 aa). The active site involves C421. At T497 the chain carries Phosphothreonine; by CHEK1. Phosphoserine; by PLK3 is present on residues S503 and S509.

The protein belongs to the MPI phosphatase family. As to quaternary structure, interacts with CCNB1/cyclin B1. Interacts with YWHAE/14-3-3 epsilon when phosphorylated. Interacts with CUL1 specifically when CUL1 is neddylated and active. Interacts with BTRC/BTRCP1 and FBXW11/BTRCP2. Interactions with CUL1, BTRC and FBXW11 are enhanced upon DNA damage. Interacts with CHEK2; mediates CDC25A phosphorylation and degradation in response to infrared-induced DNA damages. Interacts with HSP90AB1; prevents heat shock-mediated CDC25A degradation and contributes to cell cycle progression. Phosphorylated by CHEK1 on Ser-75, Ser-123, Ser-172, Ser-271, Ser-284 and Thr-497 during checkpoint mediated cell cycle arrest. Also phosphorylated by CHEK2 on Ser-123, Ser-271, and Ser-284 during checkpoint mediated cell cycle arrest. Phosphorylation on Ser-172 and Thr-497 creates binding sites for YWHAE/14-3-3 epsilon which inhibits CDC25A. Phosphorylation on Ser-75, Ser-123, Ser-172, Ser-271 and Ser-284 may also promote ubiquitin-dependent proteolysis of CDC25A by the SCF complex. Phosphorylation of CDC25A at Ser-75 by CHEK1 primes it for subsequent phosphorylation at Ser-75, Ser-81 and Ser-87 by NEK11. Phosphorylation by NEK11 is required for BTRC-mediated polyubiquitination and degradation. Phosphorylation by PIM1 leads to an increase in phosphatase activity. Phosphorylated by PLK3 following DNA damage, leading to promote its ubiquitination and degradation. Post-translationally, ubiquitinated by the anaphase promoting complex/cyclosome (APC/C) ubiquitin ligase complex that contains FZR1/CDH1 during G1 phase leading to its degradation by the proteasome. Ubiquitinated by a SCF complex containing BTRC and FBXW11 during S phase leading to its degradation by the proteasome. Deubiquitination by USP17L2/DUB3 leads to its stabilization. In terms of tissue distribution, ubiquitously expressed in most developing tissue. High levels in the testis and lower levels in the ovary, particularly in germ cells. Lower levels also in kidney, liver, heart and muscle.

The enzyme catalyses O-phospho-L-tyrosyl-[protein] + H2O = L-tyrosyl-[protein] + phosphate. With respect to regulation, stimulated by B-type cyclins. Stimulated by PIM1-mediated phosphorylation. In terms of biological role, tyrosine protein phosphatase which functions as a dosage-dependent inducer of mitotic progression. Directly dephosphorylates CDK1 and stimulates its kinase activity. Also dephosphorylates CDK2 in complex with cyclin-E, in vitro. In Mus musculus (Mouse), this protein is M-phase inducer phosphatase 1 (Cdc25a).